The chain runs to 63 residues: uncharacterized protein (63 aa).

This is an uncharacterized protein from Haemophilus influenzae (strain ATCC 51907 / DSM 11121 / KW20 / Rd).